We begin with the raw amino-acid sequence, 148 residues long: Putative nickel-responsive regulator (148 aa).

Ni(2+)-binding residues include His88, His99, His101, and Cys107.

Belongs to the transcriptional regulatory CopG/NikR family. Ni(2+) is required as a cofactor.

Functionally, transcriptional regulator. The polypeptide is Putative nickel-responsive regulator (Helicobacter acinonychis (strain Sheeba)).